A 110-amino-acid polypeptide reads, in one-letter code: Protein YcgL (110 aa).

In terms of domain architecture, YcgL spans 14–98; that stretch reads MFCVIYRSSK…PPEDLLKQHL (85 aa). The tract at residues 87-110 is disordered; the sequence is PPPPEDLLKQHLSSVGQNTSSADR. Over residues 97-110 the composition is skewed to polar residues; that stretch reads HLSSVGQNTSSADR.

The chain is Protein YcgL from Salmonella newport (strain SL254).